Consider the following 489-residue polypeptide: Cysteine--tRNA ligase (489 aa).

Cys-27 provides a ligand contact to Zn(2+). Residues 29 to 39 (VTVYDLCHLGH) carry the 'HIGH' region motif. Cys-211, His-236, and Glu-240 together coordinate Zn(2+). Residues 268–272 (KMSKS) carry the 'KMSKS' region motif. Lys-271 serves as a coordination point for ATP.

The protein belongs to the class-I aminoacyl-tRNA synthetase family. In terms of assembly, monomer. Requires Zn(2+) as cofactor.

It is found in the cytoplasm. It catalyses the reaction tRNA(Cys) + L-cysteine + ATP = L-cysteinyl-tRNA(Cys) + AMP + diphosphate. This Prochlorococcus marinus (strain MIT 9215) protein is Cysteine--tRNA ligase.